We begin with the raw amino-acid sequence, 342 residues long: Protein-ribulosamine 3-kinase, chloroplastic (342 aa).

The transit peptide at 1–46 directs the protein to the chloroplast; sequence MANVALLSAASPSTSSAAPRLRHVARRRPSRRSACPRSAASRLSIM. 141-143 is a binding site for ATP; it reads EFI. Residue D246 is the Proton acceptor of the active site.

It belongs to the fructosamine kinase family.

The protein localises to the plastid. It localises to the chloroplast. The catalysed reaction is N(6)-D-ribulosyl-L-lysyl-[protein] + ATP = N(6)-(3-O-phospho-D-ribulosyl)-L-lysyl-[protein] + ADP + H(+). The enzyme catalyses N(6)-(D-erythrulosyl)-L-lysyl-[protein] + ATP = N(6)-(3-O-phospho-D-erythrulosyl)-L-lysyl-[protein] + ADP + H(+). Functionally, initiates a process leading to the deglycation of proteins. Phosphorylates low-molecular-mass and protein-bound erythrulosamines and ribulosamines, but not fructosamines or psicosamines, on the third carbon of the sugar moiety. Protein-bound erythrulosamine 3-phosphates and ribulosamine 3-phosphates are unstable and decompose under physiological conditions. The chain is Protein-ribulosamine 3-kinase, chloroplastic from Oryza sativa subsp. japonica (Rice).